Here is a 138-residue protein sequence, read N- to C-terminus: Large ribosomal subunit protein eL14A (138 aa).

The residue at position 2 (Ser2) is an N-acetylserine.

Belongs to the eukaryotic ribosomal protein eL14 family. Component of the large ribosomal subunit (LSU). Mature yeast ribosomes consist of a small (40S) and a large (60S) subunit. The 40S small subunit contains 1 molecule of ribosomal RNA (18S rRNA) and 33 different proteins (encoded by 57 genes). The large 60S subunit contains 3 rRNA molecules (25S, 5.8S and 5S rRNA) and 46 different proteins (encoded by 81 genes). N-terminally acetylated by acetyltransferase NatA.

It localises to the cytoplasm. Functionally, component of the ribosome, a large ribonucleoprotein complex responsible for the synthesis of proteins in the cell. The small ribosomal subunit (SSU) binds messenger RNAs (mRNAs) and translates the encoded message by selecting cognate aminoacyl-transfer RNA (tRNA) molecules. The large subunit (LSU) contains the ribosomal catalytic site termed the peptidyl transferase center (PTC), which catalyzes the formation of peptide bonds, thereby polymerizing the amino acids delivered by tRNAs into a polypeptide chain. The nascent polypeptides leave the ribosome through a tunnel in the LSU and interact with protein factors that function in enzymatic processing, targeting, and the membrane insertion of nascent chains at the exit of the ribosomal tunnel. The chain is Large ribosomal subunit protein eL14A from Saccharomyces cerevisiae (strain ATCC 204508 / S288c) (Baker's yeast).